Here is a 957-residue protein sequence, read N- to C-terminus: Glycine dehydrogenase (decarboxylating) (957 aa).

N6-(pyridoxal phosphate)lysine is present on K708.

This sequence belongs to the GcvP family. In terms of assembly, the glycine cleavage system is composed of four proteins: P, T, L and H. Requires pyridoxal 5'-phosphate as cofactor.

The enzyme catalyses N(6)-[(R)-lipoyl]-L-lysyl-[glycine-cleavage complex H protein] + glycine + H(+) = N(6)-[(R)-S(8)-aminomethyldihydrolipoyl]-L-lysyl-[glycine-cleavage complex H protein] + CO2. In terms of biological role, the glycine cleavage system catalyzes the degradation of glycine. The P protein binds the alpha-amino group of glycine through its pyridoxal phosphate cofactor; CO(2) is released and the remaining methylamine moiety is then transferred to the lipoamide cofactor of the H protein. This chain is Glycine dehydrogenase (decarboxylating), found in Salmonella arizonae (strain ATCC BAA-731 / CDC346-86 / RSK2980).